A 446-amino-acid chain; its full sequence is Exodeoxyribonuclease 7 large subunit (446 aa).

This sequence belongs to the XseA family. As to quaternary structure, heterooligomer composed of large and small subunits.

It localises to the cytoplasm. The enzyme catalyses Exonucleolytic cleavage in either 5'- to 3'- or 3'- to 5'-direction to yield nucleoside 5'-phosphates.. In terms of biological role, bidirectionally degrades single-stranded DNA into large acid-insoluble oligonucleotides, which are then degraded further into small acid-soluble oligonucleotides. This Streptococcus pneumoniae (strain ATCC 700669 / Spain 23F-1) protein is Exodeoxyribonuclease 7 large subunit.